Here is a 456-residue protein sequence, read N- to C-terminus: Histidine--tRNA ligase (456 aa).

Residues 1–11 (MTQNENPSAQS) show a composition bias toward polar residues. Residues 1–22 (MTQNENPSAQSGAKPEDKARPA) form a disordered region.

It belongs to the class-II aminoacyl-tRNA synthetase family. As to quaternary structure, homodimer.

The protein resides in the cytoplasm. It carries out the reaction tRNA(His) + L-histidine + ATP = L-histidyl-tRNA(His) + AMP + diphosphate + H(+). In Cupriavidus pinatubonensis (strain JMP 134 / LMG 1197) (Cupriavidus necator (strain JMP 134)), this protein is Histidine--tRNA ligase.